The primary structure comprises 77 residues: Conotoxin PnMEKL-04 (77 aa).

The first 19 residues, 1-19, serve as a signal peptide directing secretion; it reads MEKLTILLLVAAVLMSTQA. Residues 20 to 45 constitute a propeptide that is removed on maturation; it reads LPQGGGENRLKENIKFLLKRKTAADR. Intrachain disulfides connect Cys51–Cys65, Cys58–Cys69, and Cys64–Cys73.

It belongs to the conotoxin O2 superfamily. Expressed by the venom duct.

It localises to the secreted. The protein is Conotoxin PnMEKL-04 of Conus pennaceus (Feathered cone).